We begin with the raw amino-acid sequence, 281 residues long: Pantothenate synthetase (281 aa).

30 to 37 is a binding site for ATP; the sequence is MGYLHEGH. His-37 functions as the Proton donor in the catalytic mechanism. Residue Gln-61 coordinates (R)-pantoate. Beta-alanine is bound at residue Gln-61. 147-150 is a binding site for ATP; it reads GEKD. Gln-153 contributes to the (R)-pantoate binding site. ATP is bound by residues Ile-176 and 184-187; that span reads KSSR.

It belongs to the pantothenate synthetase family. As to quaternary structure, homodimer.

It is found in the cytoplasm. The catalysed reaction is (R)-pantoate + beta-alanine + ATP = (R)-pantothenate + AMP + diphosphate + H(+). It functions in the pathway cofactor biosynthesis; (R)-pantothenate biosynthesis; (R)-pantothenate from (R)-pantoate and beta-alanine: step 1/1. Catalyzes the condensation of pantoate with beta-alanine in an ATP-dependent reaction via a pantoyl-adenylate intermediate. This is Pantothenate synthetase from Clostridium botulinum (strain Langeland / NCTC 10281 / Type F).